The chain runs to 342 residues: Defect at low temperature protein 1 (342 aa).

Residues 1 to 15 (MSGFAKLKSWLYKAS) are Cytoplasmic-facing. The chain crosses the membrane as a helical span at residues 16 to 36 (LFVSLILLIGFSVVLPIDSIA). Topologically, residues 37–47 (QASKSENNAFN) are extracellular. The helical transmembrane segment at 48–68 (TFIVVGALVVFGVFCIFIIIG) threads the bilayer. Topologically, residues 69-342 (RMLFHKSCLK…ADSYRSVIRH (274 aa)) are cytoplasmic.

It belongs to the DLT1 family.

It is found in the membrane. Its function is as follows. Required for growth under high-pressure and low-temperature conditions. The protein is Defect at low temperature protein 1 (DLT1) of Saccharomyces cerevisiae (strain RM11-1a) (Baker's yeast).